Consider the following 152-residue polypeptide: Histone H2B.1 (152 aa).

Over residues 1-28 (MAPKAEKKPAAKKPAEEEPAAEKAEKTP) the composition is skewed to basic and acidic residues. Residues 1-60 (MAPKAEKKPAAKKPAEEEPAAEKAEKTPAGKKPKAEKRLPAGKSAAKEGGDKKGKKKAKK) are disordered. N6-acetyllysine occurs at positions 7 and 37. Residue lysine 148 forms a Glycyl lysine isopeptide (Lys-Gly) (interchain with G-Cter in ubiquitin) linkage.

Belongs to the histone H2B family. In terms of assembly, the nucleosome is a histone octamer containing two molecules each of H2A, H2B, H3 and H4 assembled in one H3-H4 heterotetramer and two H2A-H2B heterodimers. The octamer wraps approximately 147 bp of DNA. Can be acetylated to form H2BK6ac and H2BK33ac. Post-translationally, monoubiquitinated to form H2BK143ub1; may give a specific tag for epigenetic transcriptional activation.

The protein localises to the nucleus. It localises to the chromosome. Core component of nucleosome. Nucleosomes wrap and compact DNA into chromatin, limiting DNA accessibility to the cellular machineries which require DNA as a template. Histones thereby play a central role in transcription regulation, DNA repair, DNA replication and chromosomal stability. DNA accessibility is regulated via a complex set of post-translational modifications of histones, also called histone code, and nucleosome remodeling. This chain is Histone H2B.1, found in Triticum aestivum (Wheat).